Consider the following 344-residue polypeptide: Ferrochelatase (344 aa).

2 residues coordinate Fe cation: histidine 214 and glutamate 295.

Belongs to the ferrochelatase family.

Its subcellular location is the cytoplasm. It carries out the reaction heme b + 2 H(+) = protoporphyrin IX + Fe(2+). It functions in the pathway porphyrin-containing compound metabolism; protoheme biosynthesis; protoheme from protoporphyrin-IX: step 1/1. Catalyzes the ferrous insertion into protoporphyrin IX. The chain is Ferrochelatase from Rhizobium etli (strain CIAT 652).